The following is a 297-amino-acid chain: Bifunctional protein FolD (297 aa).

Residues 167–169 (GRS), S192, and I233 each bind NADP(+).

The protein belongs to the tetrahydrofolate dehydrogenase/cyclohydrolase family. As to quaternary structure, homodimer.

It catalyses the reaction (6R)-5,10-methylene-5,6,7,8-tetrahydrofolate + NADP(+) = (6R)-5,10-methenyltetrahydrofolate + NADPH. The enzyme catalyses (6R)-5,10-methenyltetrahydrofolate + H2O = (6R)-10-formyltetrahydrofolate + H(+). It participates in one-carbon metabolism; tetrahydrofolate interconversion. Catalyzes the oxidation of 5,10-methylenetetrahydrofolate to 5,10-methenyltetrahydrofolate and then the hydrolysis of 5,10-methenyltetrahydrofolate to 10-formyltetrahydrofolate. This is Bifunctional protein FolD from Caulobacter vibrioides (strain ATCC 19089 / CIP 103742 / CB 15) (Caulobacter crescentus).